We begin with the raw amino-acid sequence, 458 residues long: Exodeoxyribonuclease 7 large subunit (458 aa).

Belongs to the XseA family. In terms of assembly, heterooligomer composed of large and small subunits.

The protein resides in the cytoplasm. The catalysed reaction is Exonucleolytic cleavage in either 5'- to 3'- or 3'- to 5'-direction to yield nucleoside 5'-phosphates.. Functionally, bidirectionally degrades single-stranded DNA into large acid-insoluble oligonucleotides, which are then degraded further into small acid-soluble oligonucleotides. The chain is Exodeoxyribonuclease 7 large subunit from Shouchella clausii (strain KSM-K16) (Alkalihalobacillus clausii).